Reading from the N-terminus, the 761-residue chain is Cyclin-F (761 aa).

The Nuclear localization signal 1 motif lies at 19–27 (RRRIKRRPR). Positions 28-75 (VLTLLSLPEDVLLYVLECLPAVDILSMREVHPHLRSLVDSHSSVWARA) constitute an F-box domain. One can recognise a Cyclin N-terminal domain in the interval 300–411 (NKSSIFTTQK…EIISALEGKI (112 aa)). Short sequence motifs (d box) lie at residues 316 to 319 (RYIL) and 355 to 358 (RAKL). 2 disordered regions span residues 575 to 594 (NKTK…SFVT) and 677 to 761 (AENG…SDEL). Basic and acidic residues predominate over residues 580–590 (RREESIQEDRG). Positions 589–745 (RGSFVTTPTA…LLKASRRQVK (157 aa)) are PEST. A compositionally biased stretch (low complexity) spans 691 to 718 (SSGYSSVSSGGSPTSSSSPGLPFTPTPG). The segment covering 739 to 749 (ASRRQVKRKNQ) has biased composition (basic residues).

Belongs to the cyclin family. Cyclin AB subfamily. In terms of assembly, component of the SCF(CCNF) complex.

The protein resides in the nucleus. Its subcellular location is the cytoplasm. The protein localises to the perinuclear region. It localises to the cytoskeleton. It is found in the microtubule organizing center. The protein resides in the centrosome. Its subcellular location is the centriole. Its function is as follows. Substrate recognition component of the SCF(CCNF) E3 ubiquitin-protein ligase complex which mediates the ubiquitination and subsequent proteasomal degradation of target proteins. The SCF(CCNF) E3 ubiquitin-protein ligase complex is an integral component of the ubiquitin proteasome system (UPS) and links proteasome degradation to the cell cycle. Mediates the substrate recognition and the proteasomal degradation of various target proteins during G2 phase involved in the regulation of cell cycle progression and in the maintenance of genome stability. This is Cyclin-F (ccnf) from Xenopus laevis (African clawed frog).